Here is a 714-residue protein sequence, read N- to C-terminus: Fatty acid oxidation complex subunit alpha (714 aa).

An enoyl-CoA hydratase region spans residues 1–190 (MEMASAFTLN…KLGLVDDVVP (190 aa)). The tract at residues 306-714 (APLNSVGILG…FWKTTATDLQ (409 aa)) is 3-hydroxyacyl-CoA dehydrogenase.

In the N-terminal section; belongs to the enoyl-CoA hydratase/isomerase family. This sequence in the central section; belongs to the 3-hydroxyacyl-CoA dehydrogenase family. Heterotetramer of two alpha chains (FadJ) and two beta chains (FadI).

It localises to the cytoplasm. It catalyses the reaction a (3S)-3-hydroxyacyl-CoA = a (2E)-enoyl-CoA + H2O. The enzyme catalyses a 4-saturated-(3S)-3-hydroxyacyl-CoA = a (3E)-enoyl-CoA + H2O. The catalysed reaction is a (3S)-3-hydroxyacyl-CoA + NAD(+) = a 3-oxoacyl-CoA + NADH + H(+). It carries out the reaction (3S)-3-hydroxybutanoyl-CoA = (3R)-3-hydroxybutanoyl-CoA. It functions in the pathway lipid metabolism; fatty acid beta-oxidation. In terms of biological role, catalyzes the formation of a hydroxyacyl-CoA by addition of water on enoyl-CoA. Also exhibits 3-hydroxyacyl-CoA epimerase and 3-hydroxyacyl-CoA dehydrogenase activities. This chain is Fatty acid oxidation complex subunit alpha, found in Escherichia coli O6:H1 (strain CFT073 / ATCC 700928 / UPEC).